Consider the following 364-residue polypeptide: S-adenosylmethionine:tRNA ribosyltransferase-isomerase (364 aa).

This sequence belongs to the QueA family. Monomer.

Its subcellular location is the cytoplasm. The enzyme catalyses 7-aminomethyl-7-carbaguanosine(34) in tRNA + S-adenosyl-L-methionine = epoxyqueuosine(34) in tRNA + adenine + L-methionine + 2 H(+). It participates in tRNA modification; tRNA-queuosine biosynthesis. In terms of biological role, transfers and isomerizes the ribose moiety from AdoMet to the 7-aminomethyl group of 7-deazaguanine (preQ1-tRNA) to give epoxyqueuosine (oQ-tRNA). This Bradyrhizobium sp. (strain ORS 278) protein is S-adenosylmethionine:tRNA ribosyltransferase-isomerase.